The following is a 20-amino-acid chain: KEEAKVLGTVIGIDLGTQYL.

It belongs to the heat shock protein 70 family.

The protein localises to the endoplasmic reticulum lumen. In terms of biological role, probably plays a role in facilitating the assembly of multimeric protein complexes inside the ER. The chain is Luminal-binding protein from Phaseolus vulgaris (Kidney bean).